The sequence spans 751 residues: Transposable element P transposase (751 aa).

Residues 1–77 (MKYCKFCCKA…LNADAVPSKV (77 aa)) form a THAP-type zinc finger.

Its function is as follows. P-element transposase that specifically mediates transposition of P-elements. Mediates both; precise and imprecise excision. This Drosophila melanogaster (Fruit fly) protein is Transposable element P transposase.